Consider the following 387-residue polypeptide: Succinate--CoA ligase [ADP-forming] subunit beta (387 aa).

The region spanning 9 to 244 (KAIFADNGIP…ITEENPAERE (236 aa)) is the ATP-grasp domain. ATP is bound by residues Lys-46, 53 to 55 (GRG), Glu-99, Ala-102, and Glu-107. 2 residues coordinate Mg(2+): Asn-199 and Asp-213. Substrate-binding positions include Asn-264 and 321-323 (GIV).

Belongs to the succinate/malate CoA ligase beta subunit family. In terms of assembly, heterotetramer of two alpha and two beta subunits. Mg(2+) is required as a cofactor.

The catalysed reaction is succinate + ATP + CoA = succinyl-CoA + ADP + phosphate. The enzyme catalyses GTP + succinate + CoA = succinyl-CoA + GDP + phosphate. Its pathway is carbohydrate metabolism; tricarboxylic acid cycle; succinate from succinyl-CoA (ligase route): step 1/1. Its function is as follows. Succinyl-CoA synthetase functions in the citric acid cycle (TCA), coupling the hydrolysis of succinyl-CoA to the synthesis of either ATP or GTP and thus represents the only step of substrate-level phosphorylation in the TCA. The beta subunit provides nucleotide specificity of the enzyme and binds the substrate succinate, while the binding sites for coenzyme A and phosphate are found in the alpha subunit. This chain is Succinate--CoA ligase [ADP-forming] subunit beta, found in Campylobacter jejuni subsp. jejuni serotype O:6 (strain 81116 / NCTC 11828).